A 182-amino-acid chain; its full sequence is Endoribonuclease YbeY (182 aa).

The Zn(2+) site is built by His-120, His-124, and His-130. A disordered region spans residues 157–182 (RGVSFAPKPTGAGAFPSAADRDDTQN).

It belongs to the endoribonuclease YbeY family. It depends on Zn(2+) as a cofactor.

Its subcellular location is the cytoplasm. Its function is as follows. Single strand-specific metallo-endoribonuclease involved in late-stage 70S ribosome quality control and in maturation of the 3' terminus of the 16S rRNA. The polypeptide is Endoribonuclease YbeY (Corynebacterium jeikeium (strain K411)).